The chain runs to 522 residues: Cytochrome P450 monooxygenase AKT7 (522 aa).

Residues 10–30 (LYVTCTVLAALILGYIQAMII) form a helical membrane-spanning segment. Position 452 (Cys-452) interacts with heme.

This sequence belongs to the cytochrome P450 family. Heme serves as cofactor.

It is found in the membrane. The protein operates within mycotoxin biosynthesis. Functionally, cytochrome P450 monooxygenase; part of the gene clusters that mediate the biosynthesis of the host-selective toxins (HSTs) AK-toxins responsible for Japanese pear black spot disease by the Japanese pear pathotype. AK-toxins are esters of 9,10-epoxy 8-hydroxy 9-methyldecatrienoic acid (EDA). On cellular level, AK-toxins affect plasma membrane of susceptible cells and cause a sudden increase in loss of K(+) after a few minutes of toxin treatment. The acyl-CoA ligase AKT1, the hydrolase AKT2 and enoyl-CoA hydratase AKT3 are all involved in the biosynthesis of the AK-, AF- and ACT-toxin common 9,10-epoxy-8-hydroxy-9-methyl-decatrienoic acid (EDA) structural moiety. Part of the EDA biosynthesis occurs in the peroxisome since these 3 enzymes are localized in peroxisomes. The exact roles of the 3 enzymes, as well as of additional AK-toxin clusters enzymes, including AKT4, AKT6 and AKTS1, have still to be elucidated. The Cytochrome P450 monooxygenase AKT7 on the other side functions to limit production of EDA and AK-toxin, probably via the catalysis of a side reaction of EDA or its precursor. This chain is Cytochrome P450 monooxygenase AKT7, found in Alternaria alternata (Alternaria rot fungus).